The sequence spans 445 residues: 2-oxoisovalerate dehydrogenase subunit alpha, mitochondrial (445 aa).

The transit peptide at 1 to 45 (MAVAIAAARVWRLNRGLSQAALLLLRQPGARGLARSHPPRQQQQF) directs the protein to the mitochondrion. Residues 33–52 (LARSHPPRQQQQFSSLDDKP) are disordered. The thiamine diphosphate site is built by Tyr-158 and Arg-159. Position 206 (Ser-206) interacts with K(+). Residue Ser-207 coordinates thiamine diphosphate. Residues Pro-208, Thr-211, and Gln-212 each contribute to the K(+) site. Glu-238 is a Mg(2+) binding site. Residues Gly-239, Ala-240, and Arg-265 each contribute to the thiamine diphosphate site. Mg(2+) contacts are provided by Asn-267 and Tyr-269. Position 336 (His-336) interacts with thiamine diphosphate. Phosphoserine; by BCKDK is present on Ser-337. Thr-338 carries the phosphothreonine modification. Phosphoserine is present on residues Ser-339 and Ser-347. At Lys-356 the chain carries N6-acetyllysine; alternate. Lys-356 is subject to N6-succinyllysine; alternate. At Lys-380 the chain carries N6-succinyllysine.

The protein belongs to the BCKDHA family. As to quaternary structure, heterotetramer of 2 alpha/BCKDHA and 2 beta chains/BCKDHB that forms the branched-chain alpha-keto acid decarboxylase (E1) component of the BCKD complex. The branched-chain alpha-ketoacid dehydrogenase is a large complex composed of three major building blocks E1, E2 and E3. It is organized around E2, a 24-meric cubic core composed of DBT, to which are associated 6 to 12 copies of E1, and approximately 6 copies of the dehydrogenase E3, a DLD dimer. Interacts with PPM1K. The cofactor is thiamine diphosphate. Mg(2+) is required as a cofactor. Phosphorylated at Ser-337 by BCKDK and dephosphorylated by protein phosphatase PPM1K.

It localises to the mitochondrion matrix. It catalyses the reaction N(6)-[(R)-lipoyl]-L-lysyl-[protein] + 3-methyl-2-oxobutanoate + H(+) = N(6)-[(R)-S(8)-2-methylpropanoyldihydrolipoyl]-L-lysyl-[protein] + CO2. In terms of biological role, together with BCKDHB forms the heterotetrameric E1 subunit of the mitochondrial branched-chain alpha-ketoacid dehydrogenase (BCKD) complex. The BCKD complex catalyzes the multi-step oxidative decarboxylation of alpha-ketoacids derived from the branched-chain amino-acids valine, leucine and isoleucine producing CO2 and acyl-CoA which is subsequently utilized to produce energy. The E1 subunit catalyzes the first step with the decarboxylation of the alpha-ketoacid forming an enzyme-product intermediate. A reductive acylation mediated by the lipoylamide cofactor of E2 extracts the acyl group from the E1 active site for the next step of the reaction. This chain is 2-oxoisovalerate dehydrogenase subunit alpha, mitochondrial, found in Homo sapiens (Human).